The following is a 329-amino-acid chain: Probable nicotianamine synthase 7 (329 aa).

This sequence belongs to the nicotianamine synthase (NAS)-like family.

The catalysed reaction is 3 S-adenosyl-L-methionine = nicotianamine + 3 S-methyl-5'-thioadenosine + 3 H(+). In terms of biological role, synthesizes nicotianamine, a polyamine that is the first intermediate in the synthesis of the phytosiderophores of the mugineic acid type found in gramineae which serves as a sensor for the physiological iron status within the plant, and/or might be involved in the transport of iron. This Hordeum vulgare (Barley) protein is Probable nicotianamine synthase 7 (NAS7).